Reading from the N-terminus, the 556-residue chain is Probable zinc metalloprotease EGY2, chloroplastic (556 aa).

The N-terminal 64 residues, 1–64 (MNLAVASFRG…VFRKRETLVR (64 aa)), are a transit peptide targeting the chloroplast. The tract at residues 63–133 (VRVTETQTEP…DGDKLEVSSG (71 aa)) is disordered. 7 consecutive transmembrane segments (helical) span residues 267–287 (AVPE…TLFL), 311–331 (LPGA…HILV), 336–356 (GIKL…FGAI), 374–394 (AAGP…GLFV), 437–457 (PLVI…IPAG), 484–504 (LLGL…LIFF), and 527–547 (LGIL…FAFT).

This sequence belongs to the peptidase M50B family.

Its subcellular location is the plastid. The protein resides in the chloroplast membrane. Functionally, probable membrane-associated metalloprotease that may be involved in chloroplast development. The chain is Probable zinc metalloprotease EGY2, chloroplastic (EGY2) from Arabidopsis thaliana (Mouse-ear cress).